Here is a 215-residue protein sequence, read N- to C-terminus: Pyrrolidone-carboxylate peptidase (215 aa).

Catalysis depends on residues Glu-78, Cys-141, and His-165.

The protein belongs to the peptidase C15 family. As to quaternary structure, homotetramer.

The protein resides in the cytoplasm. It carries out the reaction Release of an N-terminal pyroglutamyl group from a polypeptide, the second amino acid generally not being Pro.. Its function is as follows. Removes 5-oxoproline from various penultimate amino acid residues except L-proline. The chain is Pyrrolidone-carboxylate peptidase from Streptococcus pyogenes serotype M18 (strain MGAS8232).